A 261-amino-acid chain; its full sequence is Probable septum site-determining protein MinC (261 aa).

The segment at 106-144 (RAPAAKPADEAEPAAVPAVETAAAPAAAAAPEQSSDPAP) is disordered. Residues 118 to 144 (PAAVPAVETAAAPAAAAAPEQSSDPAP) are compositionally biased toward low complexity.

This sequence belongs to the MinC family. Interacts with MinD and FtsZ.

Its function is as follows. Cell division inhibitor that blocks the formation of polar Z ring septums. Rapidly oscillates between the poles of the cell to destabilize FtsZ filaments that have formed before they mature into polar Z rings. Prevents FtsZ polymerization. In Burkholderia orbicola (strain MC0-3), this protein is Probable septum site-determining protein MinC.